A 568-amino-acid chain; its full sequence is Probable inactive 1-aminocyclopropane-1-carboxylate synthase-like protein 2 (568 aa).

Residues 1 to 21 (MSHRSDTLPVPSGQRRGRVPR) form a disordered region. Lys-395 is subject to N6-(pyridoxal phosphate)lysine.

Belongs to the class-I pyridoxal-phosphate-dependent aminotransferase family.

The sequence is that of Probable inactive 1-aminocyclopropane-1-carboxylate synthase-like protein 2 (ACCSL) from Homo sapiens (Human).